The following is a 467-amino-acid chain: L-histidine transporter HutT (467 aa).

Transmembrane regions (helical) follow at residues 18–38, 39–59, 71–91, 99–119, 125–145, 155–175, 200–220, 245–265, 280–300, 334–354, 358–378, 402–422, and 429–449; these read FMAL…SAIQ, MAGP…FMVM, VAGS…GFIL, MVIV…FWFP, IWVL…VKVF, LKVG…AFGF, VGGL…IEII, ILLF…WPQI, GIGS…ISAI, WMTV…NYLI, VFLL…LMIL, FWPY…GVLG, and AALI…LLWC.

The protein belongs to the amino acid-polyamine-organocation (APC) superfamily. Amino acid transporter (AAT) (TC 2.A.3.1) family.

The protein resides in the cell inner membrane. The enzyme catalyses L-histidine(out) + n H(+)(out) = L-histidine(in) + n H(+)(in). With respect to regulation, transport activity is inhibited by the proton ionophores carbonyl cyanide m-chlorophenyl hydrazine (CCCP) and 2,4-dinitrophenol (DNP), but not by valinomycin, nigericin and nonactin. Uptake is reduced in the presence of the sulfhydryl reagent N-ethylmaleimide (NEM). Uptake is not affected by arginine, lysine, proline or compounds structurally related to histidine such as imidazole, 3-amino-1,2,4-triazole and urocanate. Only 1,2,4-triazolyl-3-alanine reduces the rate of L-histidine uptake significantly. Functionally, major high-affinity histidine transporter. Binds and catalyzes the uptake of histidine into the cell. Functions as an histidine:proton symporter with high specificity for histidine. The chain is L-histidine transporter HutT from Pseudomonas putida (strain ATCC 47054 / DSM 6125 / CFBP 8728 / NCIMB 11950 / KT2440).